Reading from the N-terminus, the 215-residue chain is MKFFLDTANVDKIKEFNALGLVDGVTTNPSLIKKEGRDFYEVIKEICSIVEGPVSAEVIALDAEGMVNEAKELVKIAKNVVIKIPMTKEGMKAVNILSKEGIKTNVTLIFSANQALLAAKAGATYVSPFVGRLDDIGQDGLLLISEIMQIFGAYGIETEVIVASVRHPIHVTESAKMGADIATIPFDVLDKLFNHSLTDIGIEKFLADWDAHMKR.

The Schiff-base intermediate with substrate role is filled by lysine 83.

This sequence belongs to the transaldolase family. Type 3B subfamily.

The protein localises to the cytoplasm. It catalyses the reaction D-sedoheptulose 7-phosphate + D-glyceraldehyde 3-phosphate = D-erythrose 4-phosphate + beta-D-fructose 6-phosphate. The protein operates within carbohydrate degradation; pentose phosphate pathway; D-glyceraldehyde 3-phosphate and beta-D-fructose 6-phosphate from D-ribose 5-phosphate and D-xylulose 5-phosphate (non-oxidative stage): step 2/3. Transaldolase is important for the balance of metabolites in the pentose-phosphate pathway. This is Probable transaldolase from Methanococcus maripaludis (strain C6 / ATCC BAA-1332).